The following is a 373-amino-acid chain: Histidinol-phosphate aminotransferase (373 aa).

A compositionally biased stretch (polar residues) spans 1–10; sequence MTGVPGSSIT. A disordered region spans residues 1–45; that stretch reads MTGVPGSSITLDDLPLRDDLRGKSPYGAPQLSVPVRLNTNENPHP. K237 carries the post-translational modification N6-(pyridoxal phosphate)lysine.

Belongs to the class-II pyridoxal-phosphate-dependent aminotransferase family. Histidinol-phosphate aminotransferase subfamily. As to quaternary structure, homodimer. Pyridoxal 5'-phosphate serves as cofactor.

It carries out the reaction L-histidinol phosphate + 2-oxoglutarate = 3-(imidazol-4-yl)-2-oxopropyl phosphate + L-glutamate. The protein operates within amino-acid biosynthesis; L-histidine biosynthesis; L-histidine from 5-phospho-alpha-D-ribose 1-diphosphate: step 7/9. The sequence is that of Histidinol-phosphate aminotransferase from Mycolicibacterium vanbaalenii (strain DSM 7251 / JCM 13017 / BCRC 16820 / KCTC 9966 / NRRL B-24157 / PYR-1) (Mycobacterium vanbaalenii).